The following is a 492-amino-acid chain: UPF0236 protein TTE1650/TTE2708 (492 aa).

This sequence belongs to the UPF0236 family.

In Caldanaerobacter subterraneus subsp. tengcongensis (strain DSM 15242 / JCM 11007 / NBRC 100824 / MB4) (Thermoanaerobacter tengcongensis), this protein is UPF0236 protein TTE1650/TTE2708.